The primary structure comprises 200 residues: Probable GTP-binding protein EngB (200 aa).

Positions serine 26 to lysine 200 constitute an EngB-type G domain. Residues glycine 34–serine 41, glycine 61–glutamine 65, aspartate 80–glycine 83, threonine 147–aspartate 150, and valine 179–serine 181 each bind GTP. 2 residues coordinate Mg(2+): serine 41 and threonine 63.

This sequence belongs to the TRAFAC class TrmE-Era-EngA-EngB-Septin-like GTPase superfamily. EngB GTPase family. Mg(2+) serves as cofactor.

Necessary for normal cell division and for the maintenance of normal septation. This Ehrlichia ruminantium (strain Welgevonden) protein is Probable GTP-binding protein EngB.